A 101-amino-acid polypeptide reads, in one-letter code: Integration host factor subunit beta (101 aa).

A disordered region spans residues 57–76; that stretch reads PARAGRNPRTGEHVPVDQKS.

It belongs to the bacterial histone-like protein family. In terms of assembly, heterodimer of an alpha and a beta chain.

Its function is as follows. This protein is one of the two subunits of integration host factor, a specific DNA-binding protein that functions in genetic recombination as well as in transcriptional and translational control. The protein is Integration host factor subunit beta of Nitrobacter winogradskyi (strain ATCC 25391 / DSM 10237 / CIP 104748 / NCIMB 11846 / Nb-255).